The chain runs to 366 residues: Transcription factor bHLH74 (366 aa).

Positions 1–11 (MGGESNEGGEM) are enriched in gly residues. 2 disordered regions span residues 1–20 (MGGE…DDES) and 123–201 (GESS…APKE). Basic and acidic residues-rich tracts occupy residues 123–134 (GESSHEDHHQVS) and 159–170 (KAVEEFQEDPQR). Residues 212–262 (QATNSHSLAERVRREKISERMRLLQELVPGCNKITGKAVMLDEIINYVQSL) enclose the bHLH domain.

Homodimer. Interacts with IBH1. Binds reversibly to CRY2 after blue light illumination. In terms of tissue distribution, expressed constitutively in roots, leaves, stems, and flowers.

The protein localises to the nucleus. Transcriptional activator involved in cell elongation. Regulates the expression of a subset of genes involved in cell expansion by binding to the G-box motif. Binds to chromatin DNA of the FT gene and promotes its expression, and thus triggers flowering in response to blue light. The polypeptide is Transcription factor bHLH74 (BHLH74) (Arabidopsis thaliana (Mouse-ear cress)).